A 454-amino-acid polypeptide reads, in one-letter code: Metacaspase-1A (454 aa).

Gly residues predominate over residues 1 to 16 (MSYGYPGQGYGPGGGH). The disordered stretch occupies residues 1-129 (MSYGYPGQGY…GHQTRNQGSH (129 aa)). Low complexity-rich tracts occupy residues 38–47 (YSNPGQGQYN), 59–80 (YHQQ…YPPQ), 88–101 (GQQQ…HSQR), and 109–120 (GYDIYGYPIGSG). Active-site residues include histidine 244 and cysteine 300.

Belongs to the peptidase C14B family.

Functionally, involved in cell death (apoptosis). This Neurospora crassa (strain ATCC 24698 / 74-OR23-1A / CBS 708.71 / DSM 1257 / FGSC 987) protein is Metacaspase-1A (casA).